The sequence spans 306 residues: Plant-type L-asparaginase (306 aa).

Residue T176 is the Nucleophile of the active site. Substrate contacts are provided by residues 203–206 and 225–228; these read RVGD and TGLG.

The protein belongs to the Ntn-hydrolase family. As to quaternary structure, heterotetramer of two alpha and two beta chains arranged as a dimer of alpha/beta heterodimers. The uncleaved protein forms homodimers. Post-translationally, autocleaved. Generates the alpha and beta subunits. The N-terminal residue of the beta subunit is thought to be responsible for the nucleophile hydrolase activity. Predominantly produced in the uncleaved form when gene expression is induced at 37 degrees Celsius with 0.5 mM IPTG. When produced at 42 degrees Celsius without adding IPTG, approximately 90% of the protein is found in the cleaved form, while the remaining 10% is observed as uncleaved precursor. Undergoes complete auto-cleavage within 24 hours at 37 degrees Celsius.

It carries out the reaction L-asparagine + H2O = L-aspartate + NH4(+). Its activity is regulated as follows. Undergoes auto-cleavage in a temperature-dependent and glycine-independent manner. Metal ions and EDTA do not have any significant effect on enzyme activity, indicating that activity is metal-independent. In terms of biological role, catalyzes the hydrolysis of L-asparagine into L-aspartate and ammonia. Also displays D-asparaginase activity, which is about 10% of the L-asparaginase activity. Does not exhibit glutaminase activity. The polypeptide is Plant-type L-asparaginase (Thermococcus kodakarensis (strain ATCC BAA-918 / JCM 12380 / KOD1) (Pyrococcus kodakaraensis (strain KOD1))).